Consider the following 245-residue polypeptide: SPX domain-containing protein 3 (245 aa).

One can recognise an SPX domain in the interval 1 to 142; it reads MKFGKRIKEQ…RGGLRSPFIQ (142 aa).

Plays a positive role in plant adaptation to phosphate starvation and exerts negative feedback regulation of SPX1. In Arabidopsis thaliana (Mouse-ear cress), this protein is SPX domain-containing protein 3 (SPX3).